A 275-amino-acid polypeptide reads, in one-letter code: Dermonecrotic toxin SpeSicTox-betaIIA2i (275 aa).

H5 is a catalytic residue. Positions 25 and 27 each coordinate Mg(2+). The active-site Nucleophile is the H41. 2 disulfide bridges follow: C45/C51 and C47/C190. D85 contributes to the Mg(2+) binding site.

The protein belongs to the arthropod phospholipase D family. Class II subfamily. Mg(2+) is required as a cofactor. As to expression, expressed by the venom gland.

The protein resides in the secreted. It carries out the reaction an N-(acyl)-sphingosylphosphocholine = an N-(acyl)-sphingosyl-1,3-cyclic phosphate + choline. It catalyses the reaction an N-(acyl)-sphingosylphosphoethanolamine = an N-(acyl)-sphingosyl-1,3-cyclic phosphate + ethanolamine. The enzyme catalyses a 1-acyl-sn-glycero-3-phosphocholine = a 1-acyl-sn-glycero-2,3-cyclic phosphate + choline. The catalysed reaction is a 1-acyl-sn-glycero-3-phosphoethanolamine = a 1-acyl-sn-glycero-2,3-cyclic phosphate + ethanolamine. Functionally, dermonecrotic toxins cleave the phosphodiester linkage between the phosphate and headgroup of certain phospholipids (sphingolipid and lysolipid substrates), forming an alcohol (often choline) and a cyclic phosphate. This toxin acts on sphingomyelin (SM). It may also act on ceramide phosphoethanolamine (CPE), lysophosphatidylcholine (LPC) and lysophosphatidylethanolamine (LPE), but not on lysophosphatidylserine (LPS), and lysophosphatidylglycerol (LPG). It acts by transphosphatidylation, releasing exclusively cyclic phosphate products as second products. Induces dermonecrosis, hemolysis, increased vascular permeability, edema, inflammatory response, and platelet aggregation. This is Dermonecrotic toxin SpeSicTox-betaIIA2i from Sicarius peruensis (Six-eyed sand spider).